Reading from the N-terminus, the 113-residue chain is Hydrogenase maturation factor HypA (113 aa).

His2 lines the Ni(2+) pocket. Positions 70, 73, 86, and 88 each coordinate Zn(2+).

It belongs to the HypA/HybF family.

In terms of biological role, involved in the maturation of [NiFe] hydrogenases. Required for nickel insertion into the metal center of the hydrogenase. The chain is Hydrogenase maturation factor HypA from Trichormus variabilis (strain ATCC 29413 / PCC 7937) (Anabaena variabilis).